A 454-amino-acid polypeptide reads, in one-letter code: CBL-interacting protein kinase 17 (454 aa).

Residues 13–268 enclose the Protein kinase domain; that stretch reads YEMGRTLGEG…MAGIKSHEWF (256 aa). Residues 19–27 and lysine 42 contribute to the ATP site; that span reads LGEGNFGKV. Aspartate 136 functions as the Proton acceptor in the catalytic mechanism. Residues 154-183 are activation loop; the sequence is DFGLSALPQHLGNDGLLHTTCGSPNYIAPE. Residues 304-328 enclose the NAF domain; sequence KNSHQINAFQLIGMASSLDLSGFFE. Residues 334 to 363 are PPI; the sequence is QRRIRFTSTHPPKDAFDKIESSATELGFQV.

It belongs to the protein kinase superfamily. CAMK Ser/Thr protein kinase family. SNF1 subfamily. Mn(2+) serves as cofactor.

The enzyme catalyses L-seryl-[protein] + ATP = O-phospho-L-seryl-[protein] + ADP + H(+). It catalyses the reaction L-threonyl-[protein] + ATP = O-phospho-L-threonyl-[protein] + ADP + H(+). CIPK serine-threonine protein kinases interact with CBL proteins. Binding of a CBL protein to the regulatory NAF domain of CIPK protein lead to the activation of the kinase in a calcium-dependent manner. The chain is CBL-interacting protein kinase 17 (CIPK17) from Oryza sativa subsp. japonica (Rice).